The primary structure comprises 592 residues: Inactive glycosyltransferase 25 family member 3 (592 aa).

Positions 1–19 are cleaved as a signal peptide; that stretch reads MHVARLLPLLLLLGQQLRA. 4 N-linked (GlcNAc...) asparagine glycosylation sites follow: N72, N150, N234, and N357. Residues 540-592 form a disordered region; that stretch reads AEWLSDTETSSPWDDDSGRLISQTGSQKALRGPHLHLTGSSGHSLHPHHRDEL. Positions 589–592 match the Prevents secretion from ER motif; sequence RDEL.

This sequence belongs to the glycosyltransferase 25 family.

The protein localises to the endoplasmic reticulum lumen. Its function is as follows. Probable cell adhesion protein involved in leukocyte transmigration across the blood-brain barrier. Does not express any beta-galactosyltransferase activity in vitro. The chain is Inactive glycosyltransferase 25 family member 3 (Cercam) from Mus musculus (Mouse).